The primary structure comprises 771 residues: Endoplasmin homolog (771 aa).

A signal peptide spans 1–24 (MANSSLLRVVLVALLLLGSVTVSA). Residues Asn-63, Asp-109, and Phe-160 each contribute to the ATP site. N-linked (GlcNAc...) asparagine glycosylation is present at Asn-63. Residues 253–282 (TAATPEPAAEEGSLDEGAVEEDPDKEGDTQ) are disordered. Acidic residues predominate over residues 260–277 (AAEEGSLDEGAVEEDPDK). 2 N-linked (GlcNAc...) asparagine glycosylation sites follow: Asn-306 and Asn-402. Residues 727–771 (ADDSLLPPDDAEYTVSDTEAEEEEEQPKVDANADEEAEAVGEDDL) form a disordered region. Positions 758–771 (NADEEAEAVGEDDL) are enriched in acidic residues. Residues 768 to 771 (EDDL) carry the Prevents secretion from ER motif.

The protein belongs to the heat shock protein 90 family. Homotetramer.

The protein localises to the endoplasmic reticulum. In terms of biological role, molecular chaperone that functions in the processing and transport of secreted proteins. Required for the synthesis of lipophosphoglycan (LPG), a cell surface glycoconjugate. Necessary for the attachment of the galactosyl residue to the mannose within the phosphoglycan repeats of the nascent LPG chain. Also required for addition of phosphoglycan to acid phosphatase. Not required for normal growth. Has ATPase activity. Binds heparin with micromolar affinity which may facilitate infection of host cells. The polypeptide is Endoplasmin homolog (Leishmania infantum).